A 62-amino-acid polypeptide reads, in one-letter code: Potassium channel toxin alpha-KTx 10.1 (62 aa).

A signal peptide spans 1–22 (MEGIAKITLILLFLFVTMHTFA). The propeptide occupies 23 to 28 (NWNTEA). 3 cysteine pairs are disulfide-bonded: Cys-31-Cys-50, Cys-36-Cys-55, and Cys-40-Cys-57. Tyrosine amide is present on Tyr-60.

The protein belongs to the short scorpion toxin superfamily. Potassium channel inhibitor family. Alpha-KTx 10 subfamily. In terms of tissue distribution, expressed by the venom gland.

It is found in the secreted. Blocks Shaker B (Sh) and voltage-gated potassium-channels Kv1.1/KCNA1, Kv1.2/KCNA2, Kv1.3/KCNA3. Also inhibits small conductance calcium-activated potassium channels (KCNN) and intermediate conductance calcium-activated potassium channel (KCa3.1/KCNN4). In Centruroides noxius (Mexican scorpion), this protein is Potassium channel toxin alpha-KTx 10.1.